A 75-amino-acid chain; its full sequence is MSAFWHKIGCCVVAKPPPKKKRRRIDRSMIGEPTNFVHLTHIGSGEMADGMQPSGPIKEQMRSKVPHANGRNSLL.

S-palmitoyl cysteine attachment occurs at residues Cys-10 and Cys-11. The CRIB domain maps to 30–43 (IGEPTNFVHLTHIG). The segment at 45-75 (GEMADGMQPSGPIKEQMRSKVPHANGRNSLL) is disordered.

Belongs to the CDC42SE/SPEC family.

It localises to the cytoplasm. Its subcellular location is the cytoskeleton. It is found in the cell membrane. Probably involved in the organization of the actin cytoskeleton by acting downstream of CDC42, inducing actin filament assembly. The protein is CDC42 small effector protein 1 (cdc42se1) of Danio rerio (Zebrafish).